The following is a 353-amino-acid chain: Uroporphyrinogen decarboxylase (353 aa).

Substrate-binding positions include 30–34 (RQAGR), D79, Y154, S209, and H332.

It belongs to the uroporphyrinogen decarboxylase family. Homodimer.

The protein resides in the cytoplasm. It carries out the reaction uroporphyrinogen III + 4 H(+) = coproporphyrinogen III + 4 CO2. The protein operates within porphyrin-containing compound metabolism; protoporphyrin-IX biosynthesis; coproporphyrinogen-III from 5-aminolevulinate: step 4/4. Functionally, catalyzes the decarboxylation of four acetate groups of uroporphyrinogen-III to yield coproporphyrinogen-III. This is Uroporphyrinogen decarboxylase from Mycobacterium ulcerans (strain Agy99).